The chain runs to 359 residues: Biotin synthase (359 aa).

The region spanning 67 to 302 (CCGNRVDLCS…QQILRYAGGR (236 aa)) is the Radical SAM core domain. Cys-85, Cys-89, and Cys-92 together coordinate [4Fe-4S] cluster. [2Fe-2S] cluster-binding residues include Cys-130, Cys-167, Cys-227, and Arg-297.

It belongs to the radical SAM superfamily. Biotin synthase family. Homodimer. [4Fe-4S] cluster serves as cofactor. The cofactor is [2Fe-2S] cluster.

The catalysed reaction is (4R,5S)-dethiobiotin + (sulfur carrier)-SH + 2 reduced [2Fe-2S]-[ferredoxin] + 2 S-adenosyl-L-methionine = (sulfur carrier)-H + biotin + 2 5'-deoxyadenosine + 2 L-methionine + 2 oxidized [2Fe-2S]-[ferredoxin]. It functions in the pathway cofactor biosynthesis; biotin biosynthesis; biotin from 7,8-diaminononanoate: step 2/2. Its function is as follows. Catalyzes the conversion of dethiobiotin (DTB) to biotin by the insertion of a sulfur atom into dethiobiotin via a radical-based mechanism. The protein is Biotin synthase of Gloeothece citriformis (strain PCC 7424) (Cyanothece sp. (strain PCC 7424)).